The following is a 255-amino-acid chain: Methanethiol S-methyltransferase (255 aa).

A run of 5 helical transmembrane segments spans residues 16–36, 56–76, 99–119, 131–151, and 191–211; these read FVLL…VYAV, LVTA…QHSV, YVLF…PIGI, IIFY…TFLI, and VGWF…LVFA.

This sequence belongs to the nurim family.

The protein resides in the membrane. The enzyme catalyses methanethiol + S-adenosyl-L-methionine = dimethyl sulfide + S-adenosyl-L-homocysteine + H(+). Its function is as follows. Catalyzes the methylation of methanethiol (MeSH) to yield dimethylsulphide (DMS). In Crocosphaera subtropica (strain ATCC 51142 / BH68) (Cyanothece sp. (strain ATCC 51142)), this protein is Methanethiol S-methyltransferase.